A 284-amino-acid chain; its full sequence is 2-dehydro-3-deoxyphosphooctonate aldolase (284 aa).

This sequence belongs to the KdsA family.

The protein localises to the cytoplasm. The enzyme catalyses D-arabinose 5-phosphate + phosphoenolpyruvate + H2O = 3-deoxy-alpha-D-manno-2-octulosonate-8-phosphate + phosphate. It participates in carbohydrate biosynthesis; 3-deoxy-D-manno-octulosonate biosynthesis; 3-deoxy-D-manno-octulosonate from D-ribulose 5-phosphate: step 2/3. The protein operates within bacterial outer membrane biogenesis; lipopolysaccharide biosynthesis. The polypeptide is 2-dehydro-3-deoxyphosphooctonate aldolase (Erwinia tasmaniensis (strain DSM 17950 / CFBP 7177 / CIP 109463 / NCPPB 4357 / Et1/99)).